The following is a 329-amino-acid chain: GMP reductase (329 aa).

The active-site Thioimidate intermediate is C178. An NADP(+)-binding site is contributed by 207–230 (IIADGGIRNNGDIAKSIRFGATMC).

This sequence belongs to the IMPDH/GMPR family. GuaC type 2 subfamily.

It carries out the reaction IMP + NH4(+) + NADP(+) = GMP + NADPH + 2 H(+). Its function is as follows. Catalyzes the irreversible NADPH-dependent deamination of GMP to IMP. It functions in the conversion of nucleobase, nucleoside and nucleotide derivatives of G to A nucleotides, and in maintaining the intracellular balance of A and G nucleotides. This is GMP reductase from Lacticaseibacillus casei (strain BL23) (Lactobacillus casei).